We begin with the raw amino-acid sequence, 299 residues long: Inosose dehydratase (299 aa).

Belongs to the IolE/MocC family. Glutathione serves as cofactor. Requires Co(2+) as cofactor. It depends on Mn(2+) as a cofactor.

The enzyme catalyses scyllo-inosose = 3D-3,5/4-trihydroxycyclohexane-1,2-dione + H2O. In terms of biological role, catalyzes the dehydration of inosose (2-keto-myo-inositol, 2KMI or 2,4,6/3,5-pentahydroxycyclohexanone) to 3D-(3,5/4)-trihydroxycyclohexane-1,2-dione (D-2,3-diketo-4-deoxy-epi-inositol). In Klebsiella pneumoniae (strain 342), this protein is Inosose dehydratase.